We begin with the raw amino-acid sequence, 77 residues long: Acyl carrier protein (77 aa).

In terms of domain architecture, Carrier spans 2 to 77 (SDVAERVKKI…DAIDFITANS (76 aa)). O-(pantetheine 4'-phosphoryl)serine is present on S37.

This sequence belongs to the acyl carrier protein (ACP) family. Post-translationally, 4'-phosphopantetheine is transferred from CoA to a specific serine of apo-ACP by AcpS. This modification is essential for activity because fatty acids are bound in thioester linkage to the sulfhydryl of the prosthetic group.

It localises to the cytoplasm. Its pathway is lipid metabolism; fatty acid biosynthesis. Its function is as follows. Carrier of the growing fatty acid chain in fatty acid biosynthesis. The sequence is that of Acyl carrier protein from Paramagnetospirillum magneticum (strain ATCC 700264 / AMB-1) (Magnetospirillum magneticum).